A 131-amino-acid polypeptide reads, in one-letter code: Fluoride-specific ion channel FluC (131 aa).

Transmembrane regions (helical) follow at residues 4 to 24 (LWIM…TGFV), 30 to 50 (GIFP…IGFF), 68 to 88 (LFVM…SLQT), and 104 to 124 (IALS…VAVA). The Na(+) site is built by Gly-76 and Thr-79.

This sequence belongs to the fluoride channel Fluc/FEX (TC 1.A.43) family.

It localises to the cell inner membrane. It catalyses the reaction fluoride(in) = fluoride(out). Na(+) is not transported, but it plays an essential structural role and its presence is essential for fluoride channel function. Functionally, fluoride-specific ion channel. Important for reducing fluoride concentration in the cell, thus reducing its toxicity. The polypeptide is Fluoride-specific ion channel FluC (Methylocella silvestris (strain DSM 15510 / CIP 108128 / LMG 27833 / NCIMB 13906 / BL2)).